The sequence spans 653 residues: Brain-enriched guanylate kinase-associated protein (653 aa).

At Tyr-186 the chain carries Phosphotyrosine. The interval 241 to 271 (PGSLSSHLSEASAQDLGFPEGLEKPGSRPPY) is disordered. The segment covering 243-252 (SLSSHLSEAS) has biased composition (polar residues). Residues Ser-249, Ser-278, Ser-295, and Ser-314 each carry the phosphoserine modification. Positions 288-329 (RHQDRRPSVEGPGSDVGFLQAQNSTDSTAEEEEEEEEDTEAG) are disordered. The segment covering 315-327 (TAEEEEEEEEDTE) has biased composition (acidic residues). Ser-400 and Ser-427 each carry phosphoserine. An Asymmetric dimethylarginine modification is found at Arg-435. Phosphoserine occurs at positions 523, 533, 535, 558, 560, 564, 613, and 623. The interval 587-653 (GASGSPEPEL…KAQLYGTLLN (67 aa)) is disordered.

As to quaternary structure, interacts with DLG4 and DLGAP1 and forms a ternary complex.

The protein resides in the cytoplasm. The protein localises to the membrane. Its function is as follows. May sustain the structure of the postsynaptic density (PSD). This is Brain-enriched guanylate kinase-associated protein (BEGAIN) from Ovis aries (Sheep).